Consider the following 87-residue polypeptide: Large ribosomal subunit protein bL31B (87 aa).

It belongs to the bacterial ribosomal protein bL31 family. Type B subfamily. As to quaternary structure, part of the 50S ribosomal subunit.

The chain is Large ribosomal subunit protein bL31B from Escherichia coli O9:H4 (strain HS).